We begin with the raw amino-acid sequence, 360 residues long: C-C chemokine receptor-like 2 (360 aa).

The Extracellular portion of the chain corresponds to 1-42 (MDNYTVAPDDEYDVLILDDYLDNSGPDQVPAPEFLSPQQVLQ). Asn3 is a glycosylation site (N-linked (GlcNAc...) asparagine). A helical membrane pass occupies residues 43-63 (FCCAVFAVGLLDNVLAVFILV). Over 64–73 (KYKGLKNLGN) the chain is Cytoplasmic. A helical membrane pass occupies residues 74-94 (IYFLNLALSNLCFLLPLPFWA). The Extracellular portion of the chain corresponds to 95 to 109 (HTAAHGESPGNGTCK). Asn105 carries an N-linked (GlcNAc...) asparagine glycan. Cys108 and Cys185 are joined by a disulfide. Residues 110–130 (VLVGLHSSGLYSEVFSNILLL) form a helical membrane-spanning segment. Residues 131-141 (VQGYRVFSQGR) lie on the Cytoplasmic side of the membrane. A helical membrane pass occupies residues 142-162 (LASIFTTVSCGIVACILAWAM). Topologically, residues 163–202 (ATALSLPESVFYEPRMERQKHKCAFGKPHFLPIEAPLWKY) are extracellular. The helical transmembrane segment at 203–223 (VLTSKMIILVLAFPLLVFIIC) threads the bilayer. Residues 224-243 (CRQLRRRQSFRERQYDLHKP) lie on the Cytoplasmic side of the membrane. A helical transmembrane segment spans residues 244-264 (ALVITGVFLLMWAPYNTVLFL). Residues 265–285 (SAFQEHLSLQDEKSSYHLDAS) are Extracellular-facing. A helical transmembrane segment spans residues 286-307 (VQVTQLVATTHCCVNPLLYLLL). Residues 308–360 (DRKAFMRYLRSLFPRCNDIPYQSSGGYQQAPPREGHGRPIELYSNLHQRQDII) are Cytoplasmic-facing.

This sequence belongs to the G-protein coupled receptor 1 family. In terms of tissue distribution, expressed in macrophages, astrocytes, in glial cells. Constitutively expressed by mast cells. Detected in bronchial epithelium in OVA-induced airway inflammation. Up-regulated during dendritic cell (DC) maturation.

Its subcellular location is the cell membrane. Functionally, receptor for CCL19 and chemerin/RARRES2. Does not appear to be a signaling receptor, but may have a role in modulating chemokine-triggered immune responses by capturing and internalizing CCL19 or by presenting RARRES2 ligand to CMKLR1, a functional signaling receptor. Plays a critical role for the development of Th2 responses. This Mus musculus (Mouse) protein is C-C chemokine receptor-like 2 (Ccrl2).